The following is a 114-amino-acid chain: uncharacterized protein (114 aa).

A helical membrane pass occupies residues 7–27 (YIFSFWFFFLVEYVVTFRLFL). Residues 90 to 114 (KNSPEKKKFKRGLPISSKYTDGKKR) form a disordered region.

Its subcellular location is the membrane. This is an uncharacterized protein from Saccharomyces cerevisiae (strain ATCC 204508 / S288c) (Baker's yeast).